Here is a 74-residue protein sequence, read N- to C-terminus: U19-theraphotoxin-Cg1a (74 aa).

The first 7 residues, 1–7 (IMFVWAS), serve as a signal peptide directing secretion. A propeptide spanning residues 8–36 (AAEVEERGSDQRDSPASLKSMETIFQSEQ) is cleaved from the precursor. Cystine bridges form between C39-C53, C46-C58, and C52-C66.

It belongs to the neurotoxin 10 (Hwtx-1) family. 38 (Jztx-33) subfamily. In terms of tissue distribution, expressed by the venom gland.

The protein localises to the secreted. Probable ion channel inhibitor. In Chilobrachys guangxiensis (Chinese earth tiger tarantula), this protein is U19-theraphotoxin-Cg1a.